A 134-amino-acid polypeptide reads, in one-letter code: Bradykinin-related peptides (134 aa).

An N-terminal signal peptide occupies residues 1-22; sequence MAFLKKSLFLVLFLGVVSLSFC. 3 consecutive propeptides follow at residues 23-44, 71-82, and 99-121; these read EEEKREEHEEEKRDEEDAESLG, RSISGLTPIRLS, and ISEADPGFTPSFVVIKGLSPLRG. Residues 24-33 show a composition bias toward basic and acidic residues; it reads EEKREEHEEE. The segment at 24-71 is disordered; that stretch reads EEKREEHEEEKRDEEDAESLGKRYGGLSPLRISKRVPPGFTPFRSPAR. Pro126 bears the 4-hydroxyproline; partial; in form [Hyp3]-bradykinin and [Hyp3]-bradykinin-Val,Asp mark.

This sequence belongs to the frog skin active peptide (FSAP) family. Bradykinin-related peptide subfamily. In terms of tissue distribution, expressed by the skin glands. Expression levels in inguinal glands are much higher than in granular glands.

It is found in the secreted. May produce in vitro relaxation of rat arterial smooth muscle and constriction of intestinal smooth muscle. May target bradykinin receptors (BDKRB). The protein is Bradykinin-related peptides of Physalaemus nattereri (Cuyaba dwarf frog).